The primary structure comprises 403 residues: Ribosomal RNA large subunit methyltransferase I (403 aa).

The PUA domain maps to 9–88 (YPRLVLSKGR…EPVDIAFFTR (80 aa)).

It belongs to the methyltransferase superfamily. RlmI family.

The protein resides in the cytoplasm. It catalyses the reaction cytidine(1962) in 23S rRNA + S-adenosyl-L-methionine = 5-methylcytidine(1962) in 23S rRNA + S-adenosyl-L-homocysteine + H(+). Its function is as follows. Specifically methylates the cytosine at position 1962 (m5C1962) of 23S rRNA. In Salmonella arizonae (strain ATCC BAA-731 / CDC346-86 / RSK2980), this protein is Ribosomal RNA large subunit methyltransferase I.